Consider the following 308-residue polypeptide: Very-long-chain enoyl-CoA reductase (308 aa).

The Cytoplasmic portion of the chain corresponds to 1–86 (MKHYEVEILD…YFRDLGAQIS (86 aa)). K22 carries the post-translational modification N6-acetyllysine. S58 carries the post-translational modification Phosphoserine. At K60 the chain carries N6-acetyllysine. Residues 87–106 (WVTVFLTEYAGPLFIYLLFY) traverse the membrane as a helical segment. Residues 107–124 (FRVPFIYGHKYDFTSSRH) lie on the Lumenal side of the membrane. The chain crosses the membrane as a helical span at residues 125 to 147 (TVVHLACICHSFHYIKRLLETLF). Topologically, residues 148 to 158 (VHRFSHGTMPL) are cytoplasmic. The helical transmembrane segment at 159-180 (RNIFKNCTYYWGFAAWMAYYIN) threads the bilayer. Residues 181–189 (HPLYTPPTY) are Lumenal-facing. The chain crosses the membrane as a helical span at residues 190 to 216 (GAQQVKLALAIFVICQLGNFSIHMALR). Over 217 to 245 (DLRPAGSKTRKIPYPTKNPFTWLFLLVSC) the chain is Cytoplasmic. A helical membrane pass occupies residues 246–262 (PNYTYEVGSWIGFAIMT). At 263–264 (QC) the chain is on the lumenal side. Residues 265–292 (LPVALFSLVGFTQMTIWAKGKHRSYLKE) form a helical membrane-spanning segment. At 293-308 (FRDYPPLRMPIIPFLL) the chain is on the cytoplasmic side.

The protein belongs to the steroid 5-alpha reductase family. In terms of assembly, interacts with ELOVL1 and LASS2. Interacts with HACD1 and HACD2 (via the third lumenal loop), but not with HACD3 and HACD4. Interacts with ELOVL1, ELOVL2, ELOVL3, ELOVL5 and ELOVL7 in the presence of acyl-CoA; interaction with HACD1/2 and that with ELOVLs are mutually exclusive. In terms of processing, glycosylated. In terms of tissue distribution, expressed in most tissues tested. Highly expressed in skeletal muscle.

Its subcellular location is the endoplasmic reticulum membrane. The enzyme catalyses a very-long-chain 2,3-saturated fatty acyl-CoA + NADP(+) = a very-long-chain (2E)-enoyl-CoA + NADPH + H(+). It carries out the reaction octadecanoyl-CoA + NADP(+) = (2E)-octadecenoyl-CoA + NADPH + H(+). It catalyses the reaction (2E,7Z,10Z,13Z,16Z)-docosapentaenoyl-CoA + NADPH + H(+) = (7Z,10Z,13Z,16Z)-docosatetraenoyl-CoA + NADP(+). The catalysed reaction is (2E,7Z,10Z,13Z,16Z,19Z)-docosahexaenoyl-CoA + NADPH + H(+) = (7Z,10Z,13Z,16Z,19Z)-docosapentaenoyl-CoA + NADP(+). The enzyme catalyses (2E,8Z,11Z,14Z)-eicosatetraenoyl-CoA + NADPH + H(+) = (8Z,11Z,14Z)-eicosatrienoyl-CoA + NADP(+). It carries out the reaction (2E)-hexadecenoyl-CoA + NADPH + H(+) = hexadecanoyl-CoA + NADP(+). It functions in the pathway lipid metabolism; fatty acid biosynthesis. The protein operates within lipid metabolism; sphingolipid metabolism. Functionally, involved in both the production of very long-chain fatty acids for sphingolipid synthesis and the degradation of the sphingosine moiety in sphingolipids through the sphingosine 1-phosphate metabolic pathway. Catalyzes the last of the four reactions of the long-chain fatty acids elongation cycle. This endoplasmic reticulum-bound enzymatic process, allows the addition of 2 carbons to the chain of long- and very long-chain fatty acids/VLCFAs per cycle. This enzyme reduces the trans-2,3-enoyl-CoA fatty acid intermediate to an acyl-CoA that can be further elongated by entering a new cycle of elongation. Thereby, it participates in the production of VLCFAs of different chain lengths that are involved in multiple biological processes as precursors of membrane lipids and lipid mediators. Catalyzes the saturation step of the sphingosine 1-phosphate metabolic pathway, the conversion of trans-2-hexadecenoyl-CoA to palmitoyl-CoA. In Homo sapiens (Human), this protein is Very-long-chain enoyl-CoA reductase (TECR).